We begin with the raw amino-acid sequence, 412 residues long: DNA utilization protein HofQ (412 aa).

The N-terminal stretch at 1-18 is a signal peptide; that stretch reads MKQWIAALLLMLIPGVQA.

Belongs to the bacterial secretin family. PilQ subfamily.

It is found in the cell outer membrane. Required for the use of extracellular DNA as a nutrient. Could be the porin responsible for transport of DNA across the outer membrane. The chain is DNA utilization protein HofQ (hofQ) from Escherichia coli (strain K12).